Here is a 278-residue protein sequence, read N- to C-terminus: HTH-type transcriptional activator RhaS (278 aa).

The 99-residue stretch at 174-272 (NQLMAWLEDH…NWSPRDIRQG (99 aa)) folds into the HTH araC/xylS-type domain. DNA-binding regions (H-T-H motif) lie at residues 191 to 212 (EAVA…KQHT) and 239 to 262 (VTEI…RREF).

In terms of assembly, binds DNA as a dimer.

It localises to the cytoplasm. In terms of biological role, activates expression of the rhaBAD and rhaT operons. The sequence is that of HTH-type transcriptional activator RhaS from Salmonella dublin (strain CT_02021853).